We begin with the raw amino-acid sequence, 642 residues long: 1-deoxy-D-xylulose-5-phosphate synthase (642 aa).

Residues His-79 and 120–122 each bind thiamine diphosphate; that span reads GHS. Asp-151 serves as a coordination point for Mg(2+). Thiamine diphosphate contacts are provided by residues 152 to 153, Asn-180, Tyr-290, and Glu-372; that span reads GS. Asn-180 lines the Mg(2+) pocket.

It belongs to the transketolase family. DXPS subfamily. Homodimer. Mg(2+) is required as a cofactor. Requires thiamine diphosphate as cofactor.

The catalysed reaction is D-glyceraldehyde 3-phosphate + pyruvate + H(+) = 1-deoxy-D-xylulose 5-phosphate + CO2. Its pathway is metabolic intermediate biosynthesis; 1-deoxy-D-xylulose 5-phosphate biosynthesis; 1-deoxy-D-xylulose 5-phosphate from D-glyceraldehyde 3-phosphate and pyruvate: step 1/1. In terms of biological role, catalyzes the acyloin condensation reaction between C atoms 2 and 3 of pyruvate and glyceraldehyde 3-phosphate to yield 1-deoxy-D-xylulose-5-phosphate (DXP). This chain is 1-deoxy-D-xylulose-5-phosphate synthase, found in Rhodospirillum centenum (strain ATCC 51521 / SW).